The chain runs to 289 residues: Acetyl-coenzyme A carboxylase carboxyl transferase subunit beta (289 aa).

The 262-residue stretch at 28–289 (VMTKCPKCKK…QGGEMAVWQS (262 aa)) folds into the CoA carboxyltransferase N-terminal domain. Cysteine 32, cysteine 35, cysteine 51, and cysteine 54 together coordinate Zn(2+). The C4-type zinc finger occupies 32 to 54 (CPKCKKIMYTKEVLKNLKVCVNC).

It belongs to the AccD/PCCB family. As to quaternary structure, acetyl-CoA carboxylase is a heterohexamer composed of biotin carboxyl carrier protein (AccB), biotin carboxylase (AccC) and two subunits each of ACCase subunit alpha (AccA) and ACCase subunit beta (AccD). Zn(2+) serves as cofactor.

The protein localises to the cytoplasm. It carries out the reaction N(6)-carboxybiotinyl-L-lysyl-[protein] + acetyl-CoA = N(6)-biotinyl-L-lysyl-[protein] + malonyl-CoA. The protein operates within lipid metabolism; malonyl-CoA biosynthesis; malonyl-CoA from acetyl-CoA: step 1/1. In terms of biological role, component of the acetyl coenzyme A carboxylase (ACC) complex. Biotin carboxylase (BC) catalyzes the carboxylation of biotin on its carrier protein (BCCP) and then the CO(2) group is transferred by the transcarboxylase to acetyl-CoA to form malonyl-CoA. This chain is Acetyl-coenzyme A carboxylase carboxyl transferase subunit beta, found in Bacillus anthracis (strain A0248).